The sequence spans 150 residues: SsrA-binding protein (150 aa).

Belongs to the SmpB family.

It localises to the cytoplasm. Functionally, required for rescue of stalled ribosomes mediated by trans-translation. Binds to transfer-messenger RNA (tmRNA), required for stable association of tmRNA with ribosomes. tmRNA and SmpB together mimic tRNA shape, replacing the anticodon stem-loop with SmpB. tmRNA is encoded by the ssrA gene; the 2 termini fold to resemble tRNA(Ala) and it encodes a 'tag peptide', a short internal open reading frame. During trans-translation Ala-aminoacylated tmRNA acts like a tRNA, entering the A-site of stalled ribosomes, displacing the stalled mRNA. The ribosome then switches to translate the ORF on the tmRNA; the nascent peptide is terminated with the 'tag peptide' encoded by the tmRNA and targeted for degradation. The ribosome is freed to recommence translation, which seems to be the essential function of trans-translation. This Thermotoga maritima (strain ATCC 43589 / DSM 3109 / JCM 10099 / NBRC 100826 / MSB8) protein is SsrA-binding protein.